We begin with the raw amino-acid sequence, 610 residues long: METLLAGNPANGVAKPTCNGVGALPVANSHAIIATPAAAAATLAPAGATLGRHLARRLVQIGASDVFAVPGDFNLTLLDYLIAEPGLTLVGCCNELNAGYAADGYARSRGVGACAVTFTVGGLSVLNAIAGAYSENLPVVCIVGGPNSNDYGTNRILHHTIGLPDFSQELRCFQTITCYQAIINNLDDAHEQIDTAIATALRESKPVYISVSCNLAGLSHPTFSRDPVPMFISPRLSNKANLEYAVEAAADFLNKAVKPVMVGGPKIRVAKAREAFAAVADASGYPFAVMPAAKGLVPEHHPRFIGTYWGAVSTTFCAEIVESADAYLFAGPIFNDYSSVGYSLLLKREKAVIVQPDRMVVGDGPAFGCILMPEFLRALAKRLRRNTTAYDNYRRIFVPDREPPNGKPNEPLRVNVLFKHIKGMLSGDSAVVAETGDSWFNCQKLRLPEGCGYEFQMQYGSIGWSVGATLGYAQAAKDKRVIACIGDGSFQVTAQDVSTMLRCGQKSIIFLINNGGYTIEVEIHDGPYNVIKNWDYTGLVNAIHNSEGNCWTMKVRTEEQLKEAIATVTGAKKDCLCFIEVIVHKDDTSKELLEWGSRVSAANSRPPNPQ.

Residues Asp-72 and His-159 each coordinate substrate. The tract at residues 437–519 (DSWFNCQKLR…FLINNGGYTI (83 aa)) is thiamine pyrophosphate binding. Positions 487, 514, and 516 each coordinate Mg(2+). Residue Glu-520 coordinates substrate.

This sequence belongs to the TPP enzyme family. In terms of assembly, homotetramer. It depends on a metal cation as a cofactor. Requires thiamine diphosphate as cofactor.

It carries out the reaction a 2-oxocarboxylate + H(+) = an aldehyde + CO2. The sequence is that of Pyruvate decarboxylase 1 (PDC1) from Zea mays (Maize).